We begin with the raw amino-acid sequence, 30 residues long: Platelet factor 4 (30 aa).

It belongs to the intercrine alpha (chemokine CxC) family. As to quaternary structure, homotetramer. Interacts with TNFAIP6 (via Link domain). Interacts with CCR1. Interacts with CXCR3. Post-translationally, binds non-covalently to a proteoglycan molecule.

It is found in the secreted. Functionally, chemokine released during platelet aggregation that plays a role in different biological processes including hematopoiesis, cell proliferation, differentiation, and activation. Acts via different functional receptors including CCR1, CXCR3A or CXCR3B. Upon interaction with CXCR3A receptor, induces activated T-lymphocytes migration mediated via downstream Ras/extracellular signal-regulated kinase (ERK) signaling. Neutralizes the anticoagulant effect of heparin by binding more strongly to heparin than to the chondroitin-4-sulfate chains of the carrier molecule. Plays a role in the inhibition of hematopoiesis and in the maintenance of hematopoietic stem cell (HSC) quiescence. Chemotactic for neutrophils and monocytes via CCR1. Inhibits endothelial cell proliferation. In cooperation with toll-like receptor 8/TLR8, induces chromatin remodeling and activates inflammatory gene expression via the TBK1-IRF5 axis. In addition, induces myofibroblast differentiation and collagen synthesis in different precursor cells, including endothelial cells, by stimulating endothelial-to-mesenchymal transition. The protein is Platelet factor 4 (PF4) of Oryctolagus cuniculus (Rabbit).